A 1088-amino-acid chain; its full sequence is RNA-directed RNA polymerase (1088 aa).

The region spanning Leu501–Ile687 is the RdRp catalytic domain.

The protein belongs to the reoviridae RNA-directed RNA polymerase family. In terms of assembly, interacts with VP3 (Potential). Interacts with VP2; this interaction activates VP1. Interacts with NSP5; this interaction is probably necessary for the formation of functional virus factories. Interacts with NSP2; this interaction is weak. The cofactor is Mg(2+).

Its subcellular location is the virion. The enzyme catalyses RNA(n) + a ribonucleoside 5'-triphosphate = RNA(n+1) + diphosphate. Its function is as follows. RNA-directed RNA polymerase that is involved in both transcription and genome replication. Together with VP3 capping enzyme, forms an enzyme complex positioned near the channels situated at each of the five-fold vertices of the core. Following infection, the outermost layer of the virus is lost, leaving a double-layered particle (DLP) made up of the core and VP6 shell. VP1 then catalyzes the transcription of fully conservative plus-strand genomic RNAs that are extruded through the DLP's channels into the cytoplasm where they function as mRNAs for translation of viral proteins. One copy of each of the viral (+)RNAs is also recruited during core assembly, together with newly synthesized polymerase complexes and VP2. The polymerase of these novo-formed particles catalyzes the synthesis of complementary minus-strands leading to dsRNA formation. To do so, the polymerase specifically recognizes and binds 4 bases 5'-UGUG-3' in the conserved 3'-sequence of plus-strand RNA templates. VP2 presumably activates the autoinhibited VP1-RNA complex to coordinate packaging and genome replication. Once dsRNA synthesis is complete, the polymerase switches to the transcriptional mode, thus providing secondary transcription. This is RNA-directed RNA polymerase from Rotavirus A (strain RVA/Cow/United States/NCDV-Lincoln/1969/G6P6[1]) (RV-A).